A 292-amino-acid chain; its full sequence is Acetyl-coenzyme A carboxylase carboxyl transferase subunit beta (292 aa).

Positions 36–292 constitute a CoA carboxyltransferase N-terminal domain; it reads MWSKCEKCAK…LLRMHEVDYE (257 aa). Zn(2+) is bound by residues Cys40, Cys43, Cys59, and Cys62. Residues 40–62 form a C4-type zinc finger; sequence CEKCAKILYTEDLRENFNVCPNC.

The protein belongs to the AccD/PCCB family. Acetyl-CoA carboxylase is a heterohexamer composed of biotin carboxyl carrier protein (AccB), biotin carboxylase (AccC) and two subunits each of ACCase subunit alpha (AccA) and ACCase subunit beta (AccD). It depends on Zn(2+) as a cofactor.

It localises to the cytoplasm. It carries out the reaction N(6)-carboxybiotinyl-L-lysyl-[protein] + acetyl-CoA = N(6)-biotinyl-L-lysyl-[protein] + malonyl-CoA. The protein operates within lipid metabolism; malonyl-CoA biosynthesis; malonyl-CoA from acetyl-CoA: step 1/1. Component of the acetyl coenzyme A carboxylase (ACC) complex. Biotin carboxylase (BC) catalyzes the carboxylation of biotin on its carrier protein (BCCP) and then the CO(2) group is transferred by the transcarboxylase to acetyl-CoA to form malonyl-CoA. This is Acetyl-coenzyme A carboxylase carboxyl transferase subunit beta from Clostridium perfringens (strain ATCC 13124 / DSM 756 / JCM 1290 / NCIMB 6125 / NCTC 8237 / Type A).